The following is a 399-amino-acid chain: Forkhead box protein I3 (399 aa).

Disordered regions lie at residues 87–109 (AGAQ…GSAA), 221–287 (KRRR…ASTL), and 307–353 (SSSS…STVG). Residues 96 to 109 (PSASAPASPAGSAA) show a composition bias toward low complexity. Phosphoserine is present on residues Ser-99 and Ser-103. A DNA-binding region (fork-head) is located at residues 129–223 (RPPYSYSALI…DNGNFRRKRR (95 aa)). The Nuclear localization signal signature appears at 219 to 225 (RRKRRRR). Polar residues-rich tracts occupy residues 228–248 (ASSN…SSRL) and 258–267 (SPSSILRPSQ). Ser-258, Ser-266, and Ser-268 each carry phosphoserine. 3 stretches are compositionally biased toward polar residues: residues 275-287 (TKST…ASTL), 307-317 (SSSSMGNQRTL), and 328-353 (QLPS…STVG). The 9aaTAD motif lies at 385-393 (SMVNSLIYP).

Post-translationally, phosphorylation promotes the transcription factor activity. Dephosphorylation by protein phosphatase 2A (PP2A) reduces its activity. Specifically expressed in the epithelium in developing ectodermal appendages. Expressed in pharyngeal endoderm and ectoderm. Expressed in pre-placodal ectoderm. Down-regulated as the otic placode is induced. Expressed in teeth and hair follicles throughout embryogenesis. Expressed in mammary glands only during the earliest stages of development.

It localises to the nucleus. In terms of biological role, transcription factor required for pharyngeal arch development, which is involved in hair, ear, jaw and dental development. May act as a pioneer transcription factor during pharyngeal arch development. Required for epithelial cell differentiation within the epidermis. Acts at multiple stages of otic placode induction: necessary for preplacodal ectoderm to execute an inner ear program. Required for hair follicle stem cell specification. Acts downstream of TBX1 for the formation of the thymus and parathyroid glands from the third pharyngeal pouch. The chain is Forkhead box protein I3 from Mus musculus (Mouse).